The primary structure comprises 363 residues: 3-isopropylmalate dehydrogenase (363 aa).

78–91 (XXXXXXXXXXXXXX) contributes to the NAD(+) binding site. Arg-99, Arg-109, Arg-138, and Asp-227 together coordinate substrate. Mg(2+) is bound by residues Asp-227, Asp-251, and Asp-255. 285–297 (GSAPDIEGKNIAN) provides a ligand contact to NAD(+).

It belongs to the isocitrate and isopropylmalate dehydrogenases family. LeuB type 1 subfamily. Homodimer. The cofactor is Mg(2+). It depends on Mn(2+) as a cofactor.

The protein localises to the cytoplasm. The enzyme catalyses (2R,3S)-3-isopropylmalate + NAD(+) = 4-methyl-2-oxopentanoate + CO2 + NADH. It participates in amino-acid biosynthesis; L-leucine biosynthesis; L-leucine from 3-methyl-2-oxobutanoate: step 3/4. Its function is as follows. Catalyzes the oxidation of 3-carboxy-2-hydroxy-4-methylpentanoate (3-isopropylmalate) to 3-carboxy-4-methyl-2-oxopentanoate. The product decarboxylates to 4-methyl-2 oxopentanoate. The protein is 3-isopropylmalate dehydrogenase of Buchnera aphidicola subsp. Uroleucon solidaginis.